The following is a 117-amino-acid chain: Large ribosomal subunit protein uL18 (117 aa).

This sequence belongs to the universal ribosomal protein uL18 family. As to quaternary structure, part of the 50S ribosomal subunit; part of the 5S rRNA/L5/L18/L25 subcomplex. Contacts the 5S and 23S rRNAs.

Functionally, this is one of the proteins that bind and probably mediate the attachment of the 5S RNA into the large ribosomal subunit, where it forms part of the central protuberance. The chain is Large ribosomal subunit protein uL18 from Blochmanniella floridana.